The primary structure comprises 410 residues: Na(+)/H(+) antiporter NhaA 1/4 (410 aa).

11 helical membrane passes run 16-36 (VGGSLLIGAAVIALIWANSPL), 55-75 (LNLSVETWAADGLLAVFFFIV), 95-115 (ALPIAAALGGVAVPALVFLAF), 125-145 (GGWGIPMATGIAFAVAVLAVV), 156-176 (FLLTLATVDDMSAVLVIAVAC), 178-198 (SGINFTALALAAVGLAVFGYL), 215-235 (AWLLFVPLAAVVWALMHACGV), 275-295 (IALPLFALMSAGVSLAGAGGF), 299-319 (AITWNVLAGLLVGKVVGIFGG), 340-360 (IAGIAVLGGIGFTVSLPIAEL), and 371-391 (AKGAILLASTTAALLAALLLG).

This sequence belongs to the NhaA Na(+)/H(+) (TC 2.A.33) antiporter family.

The protein resides in the cell membrane. The catalysed reaction is Na(+)(in) + 2 H(+)(out) = Na(+)(out) + 2 H(+)(in). Its function is as follows. Na(+)/H(+) antiporter that extrudes sodium in exchange for external protons. This chain is Na(+)/H(+) antiporter NhaA 1/4, found in Streptomyces coelicolor (strain ATCC BAA-471 / A3(2) / M145).